We begin with the raw amino-acid sequence, 46 residues long: Large ribosomal subunit protein bL33B (46 aa).

The protein belongs to the bacterial ribosomal protein bL33 family.

The polypeptide is Large ribosomal subunit protein bL33B (rpmG2) (Mycoplasmopsis pulmonis (strain UAB CTIP) (Mycoplasma pulmonis)).